The following is a 401-amino-acid chain: Ninja-family protein MODD (401 aa).

Disordered stretches follow at residues 95–135 and 215–238; these read KQGV…GEGR and TGNKKTGGNVNHSSDRNRCTGLPP. The segment covering 105–130 has biased composition (low complexity); it reads RPSGGAEAEPAAARLPASGSPSSGSS. The segment covering 217 to 226 has biased composition (polar residues); the sequence is NKKTGGNVNH.

This sequence belongs to the Ninja family. In terms of assembly, interacts with BZIP46, TPR3 and PUB70.

The protein localises to the nucleus. Its function is as follows. Acts as a negative regulator of abscisic acid (ABA) signaling and drought tolerance. Mediates deactivation and degradation of BZIP46, a positive regulator of ABA signaling and drought stress tolerance. Represses BZIP46 activity via interaction with the TPR3-HDAC1 corepressor complex and down-regulation of the histone acetylation level at BZIP46 target genes. Promotes BZIP46 degradation via interaction with the U-box type ubiquitin E3 ligase PUB70. The sequence is that of Ninja-family protein MODD from Oryza sativa subsp. japonica (Rice).